The primary structure comprises 354 residues: Hyaluronan and proteoglycan link protein 1 (354 aa).

A propeptide spanning residues 1-9 (MKSLLLLVL) is cleaved from the precursor. N-linked (GlcNAc...) asparagine glycosylation is found at Asn21 and Asn56. Positions 38–152 (PRLLVEAEQA…EGLEDDTAVV (115 aa)) constitute an Ig-like V-type domain. Intrachain disulfides connect Cys61–Cys139, Cys181–Cys252, Cys205–Cys226, Cys279–Cys349, and Cys304–Cys325. 2 consecutive Link domains span residues 159 to 254 (VVFP…FCFT) and 259 to 351 (GRFY…YCFR).

The protein belongs to the HAPLN family.

The protein localises to the secreted. The protein resides in the extracellular space. It is found in the extracellular matrix. Functionally, stabilizes the aggregates of proteoglycan monomers with hyaluronic acid in the extracellular cartilage matrix. The chain is Hyaluronan and proteoglycan link protein 1 (HAPLN1) from Sus scrofa (Pig).